Reading from the N-terminus, the 249-residue chain is Precorrin-4 C(11)-methyltransferase (249 aa).

The protein belongs to the precorrin methyltransferase family.

It carries out the reaction precorrin-4 + S-adenosyl-L-methionine = precorrin-5 + S-adenosyl-L-homocysteine. It functions in the pathway cofactor biosynthesis; adenosylcobalamin biosynthesis; cob(II)yrinate a,c-diamide from precorrin-2 (aerobic route): step 4/10. In terms of biological role, catalyzes the methylation of C-11 in precorrin-4 to form precorrin-5. The chain is Precorrin-4 C(11)-methyltransferase (cobM) from Rhodococcus erythropolis (Arthrobacter picolinophilus).